The chain runs to 332 residues: Glycerol-3-phosphate dehydrogenase [NAD(P)+] (332 aa).

NADPH-binding residues include Ser-11, Phe-12, Lys-32, and Lys-106. Sn-glycerol 3-phosphate is bound by residues Lys-106, Gly-137, and Ser-139. Ala-141 provides a ligand contact to NADPH. Residues Lys-192, Asp-245, Ser-255, Arg-256, and Asn-257 each coordinate sn-glycerol 3-phosphate. Lys-192 serves as the catalytic Proton acceptor. Residue Arg-256 participates in NADPH binding. The NADPH site is built by Val-280 and Glu-282.

It belongs to the NAD-dependent glycerol-3-phosphate dehydrogenase family.

It is found in the cytoplasm. It carries out the reaction sn-glycerol 3-phosphate + NAD(+) = dihydroxyacetone phosphate + NADH + H(+). The catalysed reaction is sn-glycerol 3-phosphate + NADP(+) = dihydroxyacetone phosphate + NADPH + H(+). Its pathway is membrane lipid metabolism; glycerophospholipid metabolism. Catalyzes the reduction of the glycolytic intermediate dihydroxyacetone phosphate (DHAP) to sn-glycerol 3-phosphate (G3P), the key precursor for phospholipid synthesis. This is Glycerol-3-phosphate dehydrogenase [NAD(P)+] from Staphylococcus carnosus (strain TM300).